The sequence spans 134 residues: Insulin-like peptide 4 (134 aa).

Residues 1–26 form the signal peptide; the sequence is MSLIRLGLALLLLLATVSQLLQPVQG. Intrachain disulfides connect cysteine 31–cysteine 120, cysteine 43–cysteine 133, and cysteine 119–cysteine 124. Residues 54 to 108 constitute a propeptide, connecting peptide; the sequence is SSASKDARVRDLIRKLQQPDEDIEQETETGRLKQKHTDADTEKGVPPAVGSGRKL. A disordered region spans residues 72 to 107; that stretch reads PDEDIEQETETGRLKQKHTDADTEKGVPPAVGSGRK. A compositionally biased stretch (basic and acidic residues) spans 81 to 96; it reads ETGRLKQKHTDADTEK.

The protein belongs to the insulin family. As to quaternary structure, heterodimer of a B chain and an A chain linked by two disulfide bonds. As to expression, expressed at a high level in the embryonic mesoderm, with expression continuing after gastrulation and reducing from stage 12 onwards. Highly expressed in the embryonic anterior midgut rudiment and larval midgut.

The protein localises to the secreted. In terms of biological role, possible ligand of InR/insulin-like receptor. The chain is Insulin-like peptide 4 from Drosophila melanogaster (Fruit fly).